The sequence spans 1004 residues: 2-oxoglutarate dehydrogenase E1 component (1004 aa).

The protein belongs to the alpha-ketoglutarate dehydrogenase family. Homodimer. Part of the 2-oxoglutarate dehydrogenase (OGDH) complex composed of E1 (2-oxoglutarate dehydrogenase), E2 (dihydrolipoamide succinyltransferase) and E3 (dihydrolipoamide dehydrogenase); the complex contains multiple copies of the three enzymatic components (E1, E2 and E3). The cofactor is thiamine diphosphate.

The enzyme catalyses N(6)-[(R)-lipoyl]-L-lysyl-[protein] + 2-oxoglutarate + H(+) = N(6)-[(R)-S(8)-succinyldihydrolipoyl]-L-lysyl-[protein] + CO2. Its function is as follows. E1 component of the 2-oxoglutarate dehydrogenase (OGDH) complex which catalyzes the decarboxylation of 2-oxoglutarate, the first step in the conversion of 2-oxoglutarate to succinyl-CoA and CO(2). The polypeptide is 2-oxoglutarate dehydrogenase E1 component (Brucella ovis (strain ATCC 25840 / 63/290 / NCTC 10512)).